Reading from the N-terminus, the 552-residue chain is Nucleolar complex protein 4 (552 aa).

Belongs to the CBF/MAK21 family. In terms of assembly, interacts with NOP14 and MPP10. Interacts with snoRNA U3. Component of the ribosomal small subunit (SSU) processome composed of at least 40 protein subunits and snoRNA U3.

It is found in the nucleus. The protein localises to the nucleolus. In terms of biological role, involved in nucleolar processing of pre-18S ribosomal RNA and ribosome assembly. Has a role in the nuclear export of 40S pre-ribosomal subunit to the cytoplasm. Its subcellular location and association with pre-40S subunit are unaffected by RPS19 disruptions, suggesting it acts before the ribosomal protein. The chain is Nucleolar complex protein 4 (NOC4) from Saccharomyces cerevisiae (strain ATCC 204508 / S288c) (Baker's yeast).